The chain runs to 324 residues: Cyclic GMP-AMP synthase CdnE03 (324 aa).

Residues Asp87 and Asp89 each contribute to the Mg(2+) site. Residues Asp89, 144 to 145, and Asp159 contribute to the ATP site; that span reads NK. Residue Asp159 coordinates Mg(2+). Lys224 and Ser243 together coordinate GTP.

This sequence belongs to the CD-NTase family. E03 subfamily. Mg(2+) is required as a cofactor.

The catalysed reaction is GTP + ATP = 3',2'-cGAMP + 2 diphosphate. Its activity is regulated as follows. Activated by a virus-derived, approximately 400 nucleotide RNA (called CBASS-activating bacteriophage RNA, cabRNA) that begins in the viral terminase subunit terS and extends into terL. RNA secondary and/or tertiary structure, as well as viral infection itself, are important for CdnE activation. A much longer RNA (escaper RNA) with a different secondary structure, derived from a terS-mutated virus still binds to this protein, but does not activate its nucleotide cyclase activity. Shorter viral-derived RNAs (34 and 49 nt) with extensive predicted secondary structure also activate the enzyme, although not as well as full-length cabRNA. Cyclic nucleotide synthase (second messenger synthase) of a CBASS antivirus system. CBASS (cyclic oligonucleotide-based antiphage signaling system) provides immunity against bacteriophage. The CD-NTase protein synthesizes cyclic nucleotides in response to infection; these serve as specific second messenger signals. The signals activate a diverse range of effectors, leading to bacterial cell death and thus abortive phage infection. The effector for this system is downstream Cap15. A type I-B CBASS system. Its function is as follows. Cyclic dinucleotide synthase that catalyzes the synthesis of 3',2'-cyclic GMP-AMP (cGAMP) from GTP and ATP upon activation by viral-derived cabRNA. Binds cabRNA via positive charges in its N-terminus. In terms of biological role, protects S.aureus against phage infection. When the CBASS operon (cdnE-cap15) is introduced in S.aureus strain RN4220 there is strong protection against lytic DNA phages 80alpha-vir and phi-NM1-gamma-6 but little to no protection against phages phi-NM4-gamma-4 or phi-12-gamma-3. This is Cyclic GMP-AMP synthase CdnE03 from Staphylococcus schleiferi.